We begin with the raw amino-acid sequence, 236 residues long: MDKVCAVFGGSRGIGRAVAQLMAQKGYRLAIVSRNLEVAKVTAGELGGNHLAFRCDVAKEQDVQSTFQEMEKHLGPVNFLVNAAGINRDSLLVRTKTEDMISQLHTNLLGSMLTCKAAMKTMIQQGGSIVNVGSIIGLKGNVGQSAYSATKGGLVGFSRSLAKEVARKKIRVNVVAPGFIRTDMTRHLKEEHFKKNIPLGRFGETLEVAHAVVFLLESPYITGHVLIVDGGLQLTV.

The residue at position 1 (methionine 1) is an N-acetylmethionine. NADP(+) contacts are provided by residues 11-14 (SRGI) and 34-35 (RN). The residue at position 40 (lysine 40) is an N6-acetyllysine. NADP(+) contacts are provided by residues aspartate 56 and 83–85 (AAG). Lysine 96 is subject to N6-acetyllysine. Residue serine 134 coordinates substrate. Residues tyrosine 147, lysine 151, and 180–182 (IRT) each bind NADP(+). Tyrosine 147 functions as the Proton acceptor in the catalytic mechanism. Lysine 194 is subject to N6-acetyllysine.

The protein belongs to the short-chain dehydrogenases/reductases (SDR) family. As to quaternary structure, homotetramer (in vitro). Heterotetramer with HSD17B8; contains two molecules each of HSD17B8 and CBR4. Does not form homotetramers when HSD17B8 is coexpressed, only heterotetramers (in vitro).

It is found in the mitochondrion matrix. The catalysed reaction is a (3R)-hydroxyacyl-[ACP] + NADP(+) = a 3-oxoacyl-[ACP] + NADPH + H(+). It catalyses the reaction a quinone + NADPH + H(+) = a quinol + NADP(+). It functions in the pathway lipid metabolism; fatty acid biosynthesis. In terms of biological role, component of the heterotetramer complex KAR (3-ketoacyl-[acyl carrier protein] reductase or 3-ketoacyl-[ACP] reductase) that forms part of the mitochondrial fatty acid synthase (mtFAS). Beta-subunit of the KAR heterotetramer complex, responsible for the 3-ketoacyl-ACP reductase activity of the mtFAS, reduces 3-oxoacyl-[ACP] to (3R)-hydroxyacyl-[ACP] in a NADPH-dependent manner with no chain length preference, thereby participating in mitochondrial fatty acid biosynthesis. The homotetramer has NADPH-dependent quinone reductase activity (in vitro), hence could play a role in protection against cytotoxicity of exogenous quinones. As a heterotetramer, it can also reduce 9,10-phenanthrenequinone, 1,4-benzoquinone and various other o-quinones and p-quinones (in vitro). The chain is 3-oxoacyl-[acyl-carrier-protein] reductase (Cbr4) from Mus musculus (Mouse).